We begin with the raw amino-acid sequence, 446 residues long: Methionine aminopeptidase 2-3 (446 aa).

The disordered stretch occupies residues 14–116; the sequence is ITDAGANGAD…ENRYRTTSEE (103 aa). The span at 61–76 shows a compositional bias: basic residues; it reads AKKKKNKKRKPKKKQP. The span at 86 to 96 shows a compositional bias: polar residues; it reads PLSQLFPNNSY. Residues 98–116 are compositionally biased toward basic and acidic residues; the sequence is KGEEVEYKDENRYRTTSEE. H199 lines the substrate pocket. Positions 219, 230, and 299 each coordinate a divalent metal cation. H307 is a binding site for substrate. E332 and E427 together coordinate a divalent metal cation.

This sequence belongs to the peptidase M24A family. Methionine aminopeptidase eukaryotic type 2 subfamily. Requires Co(2+) as cofactor. It depends on Zn(2+) as a cofactor. Mn(2+) is required as a cofactor. The cofactor is Fe(2+).

It localises to the cytoplasm. It carries out the reaction Release of N-terminal amino acids, preferentially methionine, from peptides and arylamides.. Cotranslationally removes the N-terminal methionine from nascent proteins. The N-terminal methionine is often cleaved when the second residue in the primary sequence is small and uncharged (Met-Ala-, Cys, Gly, Pro, Ser, Thr, or Val). This Aspergillus fumigatus (strain CBS 144.89 / FGSC A1163 / CEA10) (Neosartorya fumigata) protein is Methionine aminopeptidase 2-3.